The sequence spans 287 residues: ATP synthase subunit a (287 aa).

Helical transmembrane passes span 37 to 57 (LDSVAVSVILGVLGLFVMWLA), 96 to 116 (FIAPLALTVFVWIFLMNAMDL), 149 to 169 (LGLSSAVLILCFVYSIKIKGL), 187 to 207 (PVFALILGVVNLLMQIIEYVA), 224 to 244 (ELVFMLIALMGGAAAMSLSGV), and 266 to 286 (TLQAFIFMMLTLIYLGQAHEA).

It belongs to the ATPase A chain family. F-type ATPases have 2 components, CF(1) - the catalytic core - and CF(0) - the membrane proton channel. CF(1) has five subunits: alpha(3), beta(3), gamma(1), delta(1), epsilon(1). CF(0) has three main subunits: a(1), b(2) and c(9-12). The alpha and beta chains form an alternating ring which encloses part of the gamma chain. CF(1) is attached to CF(0) by a central stalk formed by the gamma and epsilon chains, while a peripheral stalk is formed by the delta and b chains.

It is found in the cell inner membrane. Its function is as follows. Key component of the proton channel; it plays a direct role in the translocation of protons across the membrane. The polypeptide is ATP synthase subunit a (Acidovorax sp. (strain JS42)).